The following is a 442-amino-acid chain: Metacaspase-5 (442 aa).

The first 18 residues, Met1–Pro18, serve as a signal peptide directing secretion. An important for catalytic activity region spans residues Phe19–Lys62. N-linked (GlcNAc...) asparagine glycans are attached at residues Asn69 and Asn112. His146 is an active-site residue. Asp161, Asp177, and Asp178 together coordinate Ca(2+). The active site involves Cys201. A Ca(2+)-binding site is contributed by Asp208. N-linked (GlcNAc...) asparagine glycosylation is found at Asn234, Asn257, Asn282, and Asn331. The negatively regulates catalytic activity stretch occupies residues His336–Leu442. Pro residues predominate over residues Pro348 to Pro371. Residues Pro348 to Leu442 form a disordered region. The segment covering Tyr372–Tyr382 has biased composition (low complexity). The span at Pro422 to Tyr434 shows a compositional bias: polar residues.

This sequence belongs to the peptidase C14B family. Post-translationally, in epimastigotes, the unprocessed enzyme appears to be the main form. Auto-processing is dispensable for catalytic activity towards small oligopeptide substrates.

Its subcellular location is the recycling endosome. Its activity is regulated as follows. Activated by Ca(2+). Its function is as follows. Cysteine protease that cleaves specifically after arginine or lysine residues. May play a role in apoptosis. This Trypanosoma cruzi (strain CL Brener) protein is Metacaspase-5.